The chain runs to 328 residues: Mannitol-1-phosphate 5-dehydrogenase (328 aa).

3–14 (LIHFGAGNIGCG) provides a ligand contact to NAD(+).

The protein belongs to the mannitol dehydrogenase family.

It catalyses the reaction D-mannitol 1-phosphate + NAD(+) = beta-D-fructose 6-phosphate + NADH + H(+). The chain is Mannitol-1-phosphate 5-dehydrogenase (mtlD) from Mycoplasma mycoides subsp. mycoides SC (strain CCUG 32753 / NCTC 10114 / PG1).